A 78-amino-acid polypeptide reads, in one-letter code: Surfactant-associated protein 2 (78 aa).

A signal peptide spans 1-19 (MGSGLPLVLLLTLLGSSHG). Asn37 carries N-linked (GlcNAc...) asparagine glycosylation.

In terms of processing, N-glycosylated. Predominantly expressed in lung, where it is detected in type II pneumocytes in the alveolus, and in nonciliated epithelium in bronchioli (at protein level). Also detected at lower levels in cervix, esophagus, stomach, testis and kidney.

Its subcellular location is the secreted. It localises to the cytoplasmic vesicle. The protein resides in the secretory vesicle. The protein localises to the golgi apparatus. Functionally, putative surfactant protein. This is Surfactant-associated protein 2 (SFTA2) from Homo sapiens (Human).